The following is a 1264-amino-acid chain: P-type sodium-transporting ATPase4 (1264 aa).

The segment covering 1–12 (MSSQNNNKQGGQ) has biased composition (polar residues). The interval 1–102 (MSSQNNNKQG…INGEKNDDNN (102 aa)) is disordered. Basic and acidic residues-rich tracts occupy residues 15-42 (NNKK…DELN) and 50-64 (NDMK…KKNE). 8 consecutive transmembrane segments (helical) span residues 165 to 185 (VWLI…LVAA), 186 to 206 (VASL…IVTL), 359 to 379 (GLIG…AVII), 393 to 413 (FVII…GLPM), 923 to 943 (FVCF…VAIV), 1006 to 1026 (IFEA…CTGF), 1203 to 1223 (CSIS…TSIL), and 1226 to 1246 (TCLL…NLFL).

It belongs to the cation transport ATPase (P-type) (TC 3.A.3) family.

The protein localises to the cell membrane. The enzyme catalyses Na(+)(in) + ATP + H2O = Na(+)(out) + ADP + phosphate + H(+). Inhibited by cipargamin and other spiroindolone compounds. Inhibited by 4-cyano-3-methylisoquinoline derivatives MB14 and MB10 but not RK18. Inhibited by (+)-SJ733, a dihydroisoquinolone compound. In terms of biological role, sodium-exporting ATPase. Required for the extrusion of Na(+) from the intraerythrocytic parasites to maintain a low cytosolic concentration of Na(+). This is P-type sodium-transporting ATPase4 from Plasmodium falciparum (isolate 3D7).